Consider the following 1038-residue polypeptide: Importin-7 (1038 aa).

At methionine 1 the chain carries N-acetylmethionine. Residues 22 to 101 enclose the Importin N-terminal domain; that stretch reads AERQLNEAHK…RENIVEAIIH (80 aa). The disordered stretch occupies residues 881 to 910; that stretch reads EHENDSDDDEDAEDDDETEELGSDEDDIDE. The segment covering 884 to 910 has biased composition (acidic residues); the sequence is NDSDDDEDAEDDDETEELGSDEDDIDE. Serine 886 is modified (phosphoserine). Residue threonine 898 is modified to Phosphothreonine. Serine 903 and serine 1020 each carry phosphoserine.

This sequence belongs to the importin beta family. As to quaternary structure, forms a heterodimer with KPNB1. Interacts with histone H1. Interacts with H2A, H2B, H3 and H4 histones. Interacts with SNUPN and XPO1. Interacts with RPS7 and RPL5. Interacts with RPL23A (via BIB domain). Binds directly to nuclear pore complexes. Interacts with SMAD4 and NUP93; translocates SMAD4 to the nucleus through the NPC upon BMP7 stimulation resulting in activation of SMAD4 signaling. Interacts with phosphorylated SMAD2; the interaction facilitates translocation of SMAD2 to the nucleus. Interacts with SRP19. Interacts with RUNX2; the interaction inhibits RUNX2 nuclear translocation in osteoblasts. Interacts with HDAC6, DLX3 and KLF4; the interaction facilitates HDAC6, DLX3 and KLF4 nuclear translocation in dental papilla cells.

The protein resides in the cytoplasm. It is found in the nucleus. Functionally, functions in nuclear protein import, either by acting as autonomous nuclear transport receptor or as an adapter-like protein in association with the importin-beta subunit KPNB1. Acting autonomously is thought to serve itself as receptor for nuclear localization signals (NLS) and to promote translocation of import substrates through the nuclear pore complex (NPC) by an energy requiring, Ran-dependent mechanism. At the nucleoplasmic side of the NPC, Ran binds to importin, the importin/substrate complex dissociates and importin is re-exported from the nucleus to the cytoplasm where GTP hydrolysis releases Ran. Mediates autonomously the nuclear import of ribosomal proteins RPL23A, RPS7 and RPL5. In association with KPNB1 mediates the nuclear import of H1 histone and the Ran-binding site of IPO7 is not required but synergizes with that of KPNB1 in importin/substrate complex dissociation. Promotes odontoblast differentiation via promoting nuclear translocation of DLX3, KLF4, SMAD2, thereby facilitating the transcription of target genes that play a role in odontoblast differentiation. Facilitates BMP4-induced translocation of SMAD1 to the nucleus and recruitment to the MSX1 gene promoter, thereby promotes the expression of the odontogenic regulator MSX1 in dental mesenchymal cells. Also promotes odontoblast differentiation by facilitating the nuclear translocation of HDAC6 and subsequent repression of RUNX2 expression. Inhibits osteoblast differentiation by inhibiting nuclear translocation of RUNX2 and therefore inhibition of RUNX2 target gene transcription. In vitro, mediates nuclear import of H2A, H2B, H3 and H4 histones. In Mus musculus (Mouse), this protein is Importin-7 (Ipo7).